The sequence spans 20 residues: Tetracycline resistance leader peptide (20 aa).

The chain is Tetracycline resistance leader peptide (tetL) from Bacillus cereus.